The sequence spans 85 residues: Putative membrane protein insertion efficiency factor (85 aa).

It belongs to the UPF0161 family.

It localises to the cell inner membrane. Could be involved in insertion of integral membrane proteins into the membrane. This chain is Putative membrane protein insertion efficiency factor, found in Sodalis glossinidius (strain morsitans).